A 200-amino-acid polypeptide reads, in one-letter code: Serine/threonine-protein kinase mos (200 aa).

The 199-residue stretch at leucine 2–alanine 200 folds into the Protein kinase domain. Residues leucine 8–valine 16 and lysine 29 contribute to the ATP site. Aspartate 143 serves as the catalytic Proton acceptor.

Belongs to the protein kinase superfamily. Ser/Thr protein kinase family.

The catalysed reaction is L-seryl-[protein] + ATP = O-phospho-L-seryl-[protein] + ADP + H(+). It carries out the reaction L-threonyl-[protein] + ATP = O-phospho-L-threonyl-[protein] + ADP + H(+). This is Serine/threonine-protein kinase mos (MOS) from Apteryx australis (Southern brown kiwi).